The chain runs to 348 residues: Holliday junction branch migration complex subunit RuvB (348 aa).

A large ATPase domain (RuvB-L) region spans residues 1-184 (MTLNRDMVSP…FGIVQRLEFY (184 aa)). Residues Leu23, Arg24, Gly65, Lys68, Thr69, Thr70, Arg174, Tyr184, and Arg221 each contribute to the ATP site. Thr69 contributes to the Mg(2+) binding site. Residues 185-255 (AVDHLVLIVE…VAQKALDLLD (71 aa)) form a small ATPAse domain (RuvB-S) region. The head domain (RuvB-H) stretch occupies residues 258-348 (SHGFDTMDRK…QEVSDLFPNE (91 aa)). DNA-binding residues include Arg294, Arg313, and Arg318.

The protein belongs to the RuvB family. In terms of assembly, homohexamer. Forms an RuvA(8)-RuvB(12)-Holliday junction (HJ) complex. HJ DNA is sandwiched between 2 RuvA tetramers; dsDNA enters through RuvA and exits via RuvB. An RuvB hexamer assembles on each DNA strand where it exits the tetramer. Each RuvB hexamer is contacted by two RuvA subunits (via domain III) on 2 adjacent RuvB subunits; this complex drives branch migration. In the full resolvosome a probable DNA-RuvA(4)-RuvB(12)-RuvC(2) complex forms which resolves the HJ.

Its subcellular location is the cytoplasm. The catalysed reaction is ATP + H2O = ADP + phosphate + H(+). Functionally, the RuvA-RuvB-RuvC complex processes Holliday junction (HJ) DNA during genetic recombination and DNA repair, while the RuvA-RuvB complex plays an important role in the rescue of blocked DNA replication forks via replication fork reversal (RFR). RuvA specifically binds to HJ cruciform DNA, conferring on it an open structure. The RuvB hexamer acts as an ATP-dependent pump, pulling dsDNA into and through the RuvAB complex. RuvB forms 2 homohexamers on either side of HJ DNA bound by 1 or 2 RuvA tetramers; 4 subunits per hexamer contact DNA at a time. Coordinated motions by a converter formed by DNA-disengaged RuvB subunits stimulates ATP hydrolysis and nucleotide exchange. Immobilization of the converter enables RuvB to convert the ATP-contained energy into a lever motion, pulling 2 nucleotides of DNA out of the RuvA tetramer per ATP hydrolyzed, thus driving DNA branch migration. The RuvB motors rotate together with the DNA substrate, which together with the progressing nucleotide cycle form the mechanistic basis for DNA recombination by continuous HJ branch migration. Branch migration allows RuvC to scan DNA until it finds its consensus sequence, where it cleaves and resolves cruciform DNA. In Nitrosococcus oceani (strain ATCC 19707 / BCRC 17464 / JCM 30415 / NCIMB 11848 / C-107), this protein is Holliday junction branch migration complex subunit RuvB.